The following is a 246-amino-acid chain: Carboxy-S-adenosyl-L-methionine synthase (246 aa).

Residues Tyr-39, 64 to 66 (GCS), 89 to 90 (DN), 117 to 118 (DI), Asn-132, and Arg-199 contribute to the S-adenosyl-L-methionine site.

Belongs to the class I-like SAM-binding methyltransferase superfamily. Cx-SAM synthase family. In terms of assembly, homodimer.

The enzyme catalyses prephenate + S-adenosyl-L-methionine = carboxy-S-adenosyl-L-methionine + 3-phenylpyruvate + H2O. Its function is as follows. Catalyzes the conversion of S-adenosyl-L-methionine (SAM) to carboxy-S-adenosyl-L-methionine (Cx-SAM). In Enterobacter sp. (strain 638), this protein is Carboxy-S-adenosyl-L-methionine synthase.